The primary structure comprises 311 residues: MLEVIFLGTGGIMPNRERNVPAIALRYKGEIILFDVGEGTMRQMSTAKLSPMKVEKIFITHFHGDHYLGLAALIQTMNLWNREKPLHIYGPKYTFRFIQNFLNSGFFRPGFDIHVHEIGEVRLKFGDYEIWSFKVEHGIPALGYVFKEKDKRGKFLPEKLAEYGLSEGPILGKLEKQGQIEWNGRIIRLEDVTGPRRKGVKVVYTGDTEPCERTRLFAENADLLIHEATYLRPEDRGDSYHTTVGEACEIAKKAKVKLLALFHRAFRYTYDEYMAKARELCDVPFVIPKDFDVLTFKSGRWEMRNLLEDWQ.

Zn(2+) is bound by residues His-61, His-63, Asp-65, His-66, His-137, Asp-207, and His-263. Catalysis depends on Asp-65, which acts as the Proton acceptor.

It belongs to the RNase Z family. In terms of assembly, homodimer. Requires Zn(2+) as cofactor.

The catalysed reaction is Endonucleolytic cleavage of RNA, removing extra 3' nucleotides from tRNA precursor, generating 3' termini of tRNAs. A 3'-hydroxy group is left at the tRNA terminus and a 5'-phosphoryl group is left at the trailer molecule.. Zinc phosphodiesterase, which displays some tRNA 3'-processing endonuclease activity. Probably involved in tRNA maturation, by removing a 3'-trailer from precursor tRNA. This chain is Ribonuclease Z, found in Thermococcus onnurineus (strain NA1).